Reading from the N-terminus, the 857-residue chain is MPQKTSETPMMQQYNEIKAQYPDAFLFYRIGDFYELFNDDAIKGAQLLELTLTARNKSADDPIPMAGVPHHAVQSYVDILIDHGYKVAICEQMEDPKKAVGMVKRAVIQLVTPGTNVDIKAGAAKSNNYITAVMPHAAGYAFAYADVSTGELKVTDLKSKFALQNELSALATKEIVVPEELTDDDAGMLKQGERLLSVQPDAEPTSEGSYVSQALTDPAEAAVVQMLMAYLLNTQKRSLAHIQKAVAYQPSAYLEMDQDARSNLDILQNSRTGRKGDTLLSLLDSTKTAMGGRLLKQWLDRPLLDIDAISVRQNQVQDLLDHFFERSELQERLTKVYDLERLAGRVAFGTVNGRDLIQLQTSLDQIPAIQDVLGKLDDGSFKALRSKMDPVSDVAGLIRRAIEPEPPISVTDGGLILRGYNQKLDSYRDAMKNSKQWIAELEASERKATGIHTLKIRYNKVFGYFIEVTKSNLDKIPEGRYERKQTLTNAERFITPELKEKETLILEAQESSTALEYDLFQDIRDKVKAQIKRLQALAAQISSLDVLQSFATVAENSHYVRPTMHAGTHDINVKGGRHPVVEHVLGRDSYIPNDVIMNHDTDMLLITGPNMSGKSTYMRQLALIVIMAQAGSFVPADVADLPIFDQIFTRIGAADDLANGESTFMVEMLEANAALSHATASSLILFDEIGRGTATYDGMALAQAIIEFLHDHVHAKTLFSTHYHELTSLSDSLAKLKNVHVGAVEEHGNLVFLHKMMPGPADKSYGIHVAKLAGLPADLLARADTILKQLEADAPNKTAPAPAPQVEEQQLSLFEEPKPTPKNSPILTKLAKFDLMAATPMDAMNFIFDLQKHLKKK.

608 to 615 (GPNMSGKS) contacts ATP.

This sequence belongs to the DNA mismatch repair MutS family.

This protein is involved in the repair of mismatches in DNA. It is possible that it carries out the mismatch recognition step. This protein has a weak ATPase activity. In Lacticaseibacillus paracasei (strain ATCC 334 / BCRC 17002 / CCUG 31169 / CIP 107868 / KCTC 3260 / NRRL B-441) (Lactobacillus paracasei), this protein is DNA mismatch repair protein MutS.